Here is a 570-residue protein sequence, read N- to C-terminus: Urease subunit alpha 1 (570 aa).

In terms of domain architecture, Urease spans 131–570 (GGIDTHVHFI…VPMAQRYFLF (440 aa)). Positions 136, 138, and 219 each coordinate Ni(2+). An N6-carboxylysine modification is found at K219. H221 is a substrate binding site. Positions 248 and 274 each coordinate Ni(2+). H322 serves as the catalytic Proton donor. Residue D362 coordinates Ni(2+).

It belongs to the metallo-dependent hydrolases superfamily. Urease alpha subunit family. In terms of assembly, heterotrimer of UreA (gamma), UreB (beta) and UreC (alpha) subunits. Three heterotrimers associate to form the active enzyme. The cofactor is Ni cation. In terms of processing, carboxylation allows a single lysine to coordinate two nickel ions.

Its subcellular location is the cytoplasm. It carries out the reaction urea + 2 H2O + H(+) = hydrogencarbonate + 2 NH4(+). The protein operates within nitrogen metabolism; urea degradation; CO(2) and NH(3) from urea (urease route): step 1/1. Functionally, disrupting the ure1 operon causes loss of urease activity, decreased resistance to low pH killing in vitro and decreased pathogen survival when inoculated in BALB/c mice by gavage. The polypeptide is Urease subunit alpha 1 (Brucella suis biovar 1 (strain 1330)).